The primary structure comprises 70 residues: UPF0519 protein B (70 aa).

This sequence belongs to the UPF0519 family.

In Dictyostelium discoideum (Social amoeba), this protein is UPF0519 protein B (sigN122).